The primary structure comprises 438 residues: Ornithine aminotransferase car2 (438 aa).

Lys275 bears the N6-(pyridoxal phosphate)lysine mark.

It belongs to the class-III pyridoxal-phosphate-dependent aminotransferase family. Pyridoxal 5'-phosphate serves as cofactor.

The protein resides in the cytoplasm. It localises to the nucleus. The catalysed reaction is a 2-oxocarboxylate + L-ornithine = L-glutamate 5-semialdehyde + an L-alpha-amino acid. Its pathway is amino-acid biosynthesis; L-proline biosynthesis; L-glutamate 5-semialdehyde from L-ornithine: step 1/1. The chain is Ornithine aminotransferase car2 (car2) from Schizosaccharomyces pombe (strain 972 / ATCC 24843) (Fission yeast).